Here is a 98-residue protein sequence, read N- to C-terminus: Small ribosomal subunit protein uS19 (98 aa).

Positions 77-98 (TRTYRGHAGGKSEKGGSAPRKK) are disordered.

It belongs to the universal ribosomal protein uS19 family.

Its function is as follows. Protein S19 forms a complex with S13 that binds strongly to the 16S ribosomal RNA. The polypeptide is Small ribosomal subunit protein uS19 (Chlorobium phaeobacteroides (strain BS1)).